The chain runs to 240 residues: Protein unc-119 homolog A (240 aa).

Over residues 1–11 the composition is skewed to gly residues; it reads MKVKKGGGGAG. Positions 1-59 are required for midbody localization; sequence MKVKKGGGGAGTATESAPGPSGQSVAPIPQPPAESESGSESEPDAGPGPRPGPLQRKQP. The interval 1–61 is disordered; that stretch reads MKVKKGGGGA…GPLQRKQPIG (61 aa). S37, S39, and S41 each carry phosphoserine; by CK2. Residues 121–240 are required for centrosome localization; that stretch reads LDPNAGRFVR…KADYSYSGTP (120 aa). Y131 contacts tetradecanoate.

This sequence belongs to the PDE6D/unc-119 family. In terms of assembly, interacts with CABP4; in the absence of calcium. Interacts with DNM1; leading to a decrease of DNM1 GTPase activity. May interact with GTP-bound ARL1. Interacts with ARL2 and ARL3 (GTP-bound forms); this promotes the release of myyristoylated cargo proteins. Found in a complex with ARL3, RP2 and UNC119; RP2 induces hydrolysis of GTP ARL3 in the complex, leading to the release of UNC119. Interacts with NPHP3 (when myristoylated). Interacts with CYS1 (when myristoylated). Interacts with MACIR; interaction only takes place when UNC119 is not liganded with myristoylated proteins. Interacts with LCK; this interaction plays a crucial role in activation of LCK. Interacts with FYN. Interacts with RAB11A; in a cell cycle-dependent manner. Interacts with LYN (via SH2 and SH3 domains); leading to LYN activation. Found in a complex with ABL1, ABL2, CRK and UNC119; leading to the inhibition of CRK phosphorylation by ABL kinases. Interacts with CD44; leading to Shigella invasion. Interacts with KLHL18 (via kelch repeats). Interacts with PPP3CA, PPP3CB and PPP3CC. Interacts with USP48; this interaction promotes UNC119 stability. In terms of processing, phosphorylation suppresses its interaction with KLHL18 and down-regulates its KLHL18-mediated degradation. Phosphorylated more under light conditions than dark conditions. Dephosphorylated by calcineurin. In terms of tissue distribution, abundantly expressed in retina, in photoreceptor synapses and inner segments. Expressed in a much lesser extent in several other tissues.

It localises to the cytoplasm. The protein resides in the cytoskeleton. Its subcellular location is the microtubule organizing center. The protein localises to the centrosome. It is found in the spindle pole. It localises to the spindle. Involved in synaptic functions in photoreceptor cells, the signal transduction in immune cells as a Src family kinase activator, endosome recycling, the uptake of bacteria and endocytosis, protein trafficking in sensory neurons and as lipid-binding chaperone with specificity for a diverse subset of myristoylated proteins. Specifically binds the myristoyl moiety of a subset of N-terminally myristoylated proteins and is required for their localization. Binds myristoylated GNAT1 and is required for G-protein localization and trafficking in sensory neurons. Probably plays a role in trafficking proteins in photoreceptor cells. Plays important roles in mediating Src family kinase signals for the completion of cytokinesis via RAB11A. The chain is Protein unc-119 homolog A (UNC119) from Homo sapiens (Human).